The primary structure comprises 708 residues: Lactotransferrin (708 aa).

Residues 1-19 (MKLFVPALLSLGALGLCLA) form the signal peptide. Transferrin-like domains lie at 25–352 (VRWC…NLRE) and 364–693 (VVWC…NLKK). Intrachain disulfides connect Cys-28-Cys-64 and Cys-38-Cys-55. Asp-79 is a Fe cation binding site. Lys-92 is an active-site residue. Tyr-111 provides a ligand contact to Fe cation. Intrachain disulfides connect Cys-134–Cys-217, Cys-176–Cys-192, Cys-179–Cys-202, Cys-189–Cys-200, and Cys-250–Cys-264. Hydrogencarbonate is bound by residues Thr-136, Arg-140, Ala-142, and Gly-143. Tyr-211 provides a ligand contact to Fe cation. The N-linked (GlcNAc...) (high mannose) asparagine glycan is linked to Asn-252. Residue His-272 participates in Fe cation binding. Ser-278 functions as the Nucleophile in the catalytic mechanism. An N-linked (GlcNAc...) (hybrid) asparagine glycan is attached at Asn-300. 2 disulfide bridges follow: Cys-367–Cys-399 and Cys-377–Cys-390. Positions 414 and 452 each coordinate Fe cation. 8 cysteine pairs are disulfide-bonded: Cys-424–Cys-703, Cys-444–Cys-666, Cys-476–Cys-551, Cys-500–Cys-694, Cys-510–Cys-524, Cys-521–Cys-534, Cys-592–Cys-606, and Cys-644–Cys-649. Thr-478, Arg-482, Ala-484, and Gly-485 together coordinate hydrogencarbonate. Residue Asn-495 is glycosylated (N-linked (GlcNAc...) (complex) asparagine; alternate). Asn-495 carries N-linked (GlcNAc...) (high mannose) asparagine; alternate glycosylation. A glycan (N-linked (GlcNAc...) (hybrid) asparagine; alternate) is linked at Asn-495. Tyr-545 is a binding site for Fe cation. Asn-564 carries N-linked (GlcNAc...) (high mannose) asparagine glycosylation. Fe cation is bound at residue His-614.

The protein belongs to the transferrin family. As to quaternary structure, monomer. Found in a complex with LTF, CLU, EPPIN and SEMG1. Found in a complex with MPO and LTF; interacts directly with CP, allows Fe(3+) incorporation into LTF and activation of CP ferroxidase activity. Post-translationally, poly-N-acetyllactosaminic carbohydrate moiety seems to be needed for TLR4 activation.

It localises to the secreted. It is found in the cytoplasmic granule. Its function is as follows. Transferrins are iron binding transport proteins which can bind two Fe(3+) ions in association with the binding of an anion, usually bicarbonate. Functionally, major iron-binding and multifunctional protein found in exocrine fluids such as breast milk and mucosal secretions. Has antimicrobial activity, which depends on the extracellular cation concentration. Antimicrobial properties include bacteriostasis, which is related to its ability to sequester free iron and thus inhibit microbial growth, as well as direct bactericidal properties leading to the release of lipopolysaccharides from the bacterial outer membrane. Can also prevent bacterial biofilm development in P.aeruginosa infection. Has weak antifungal activity against C.albicans. Has anabolic, differentiating and anti-apoptotic effects on osteoblasts and can also inhibit osteoclastogenesis, possibly playing a role in the regulation of bone growth. Promotes binding of species C adenoviruses to epithelial cells, promoting adenovirus infection. Can inhibit papillomavirus infections. Stimulates the TLR4 signaling pathway leading to NF-kappa-B activation and subsequent pro-inflammatory cytokine production while also interfering with the lipopolysaccharide (LPS)-stimulated TLR4 signaling. Inhibits neutrophil granulocyte migration to sites of apoptosis, when secreted by apoptotic cells. Stimulates VEGFA-mediated endothelial cell migration and proliferation. Binds heparin, chondroitin sulfate and possibly other glycosaminoglycans (GAGs). Also binds specifically to pneumococcal surface protein A (PspA), the lipid A portion of bacterial lipopolysaccharide (LPS), lysozyme and DNA. Lactoferricin binds to the bacterial surface and is crucial for the bactericidal functions. Has some antiviral activity against papillomavirus infection. N-terminal region shows strong antifungal activity against C.albicans. Contains two BBXB heparin-binding consensus sequences that appear to form the predominate functional GAG-binding site. In terms of biological role, the lactotransferrin transferrin-like domain 1 functions as a serine protease of the peptidase S60 family that cuts arginine rich regions. This function contributes to the antimicrobial activity. Shows a preferential cleavage at -Arg-Ser-Arg-Arg-|- and -Arg-Arg-Ser-Arg-|-, and of Z-Phe-Arg-|-aminomethylcoumarin sites. The chain is Lactotransferrin (LTF) from Bubalus bubalis (Domestic water buffalo).